We begin with the raw amino-acid sequence, 208 residues long: Interleukin-6 (208 aa).

A signal peptide spans 1–29 (MNSRFTSAFTPFAVSLGLLLVMTSAFPTP). N-linked (GlcNAc...) asparagine glycosylation occurs at N38. C72 and C78 are disulfide-bonded. S81 is subject to Phosphoserine. The cysteines at positions 101 and 111 are disulfide-linked.

The protein belongs to the IL-6 superfamily. As to quaternary structure, component of a hexamer of two molecules each of IL6, IL6R and IL6ST; first binds to IL6R to associate with the signaling subunit IL6ST. Interacts with IL6R (via the N-terminal ectodomain); this interaction may be affected by IL6R-binding with SORL1, hence decreasing IL6 cis signaling. Interacts with SORL1 (via the N-terminal ectodomain); this interaction leads to IL6 internalization and lysosomal degradation. May form a trimeric complex with the soluble SORL1 ectodomain and soluble IL6R receptor; this interaction might stabilize circulating IL6, hence promoting IL6 trans signaling.

It is found in the secreted. Its function is as follows. Cytokine with a wide variety of biological functions in immunity, tissue regeneration, and metabolism. Binds to IL6R, then the complex associates to the signaling subunit IL6ST/gp130 to trigger the intracellular IL6-signaling pathway. The interaction with the membrane-bound IL6R and IL6ST stimulates 'classic signaling', whereas the binding of IL6 and soluble IL6R to IL6ST stimulates 'trans-signaling'. Alternatively, 'cluster signaling' occurs when membrane-bound IL6:IL6R complexes on transmitter cells activate IL6ST receptors on neighboring receiver cells. Functionally, IL6 is a potent inducer of the acute phase response. Rapid production of IL6 contributes to host defense during infection and tissue injury, but excessive IL6 synthesis is involved in disease pathology. In the innate immune response, is synthesized by myeloid cells, such as macrophages and dendritic cells, upon recognition of pathogens through toll-like receptors (TLRs) at the site of infection or tissue injury. In the adaptive immune response, is required for the differentiation of B cells into immunoglobulin-secreting cells. Plays a major role in the differentiation of CD4(+) T cell subsets. Essential factor for the development of T follicular helper (Tfh) cells that are required for the induction of germinal-center formation. Required to drive naive CD4(+) T cells to the Th17 lineage. Also required for proliferation of myeloma cells and the survival of plasmablast cells. Acts as an essential factor in bone homeostasis and on vessels directly or indirectly by induction of VEGF, resulting in increased angiogenesis activity and vascular permeability. Induces, through 'trans-signaling' and synergistically with IL1B and TNF, the production of VEGF. Involved in metabolic controls, is discharged into the bloodstream after muscle contraction increasing lipolysis and improving insulin resistance. 'Trans-signaling' in central nervous system also regulates energy and glucose homeostasis. Mediates, through GLP-1, crosstalk between insulin-sensitive tissues, intestinal L cells and pancreatic islets to adapt to changes in insulin demand. Also acts as a myokine. Plays a protective role during liver injury, being required for maintenance of tissue regeneration. Also has a pivotal role in iron metabolism by regulating HAMP/hepcidin expression upon inflammation or bacterial infection. Through activation of IL6ST-YAP-NOTCH pathway, induces inflammation-induced epithelial regeneration. This Bubalus bubalis (Domestic water buffalo) protein is Interleukin-6 (IL6).